Reading from the N-terminus, the 584-residue chain is AP-1-like transcription factor yap1 (584 aa).

A disordered region spans residues 23 to 179 (LAALSSNQPP…AFRERKEKHL (157 aa)). A Bipartite nuclear localization signal motif is present at residues 35-42 (QQNDKQRS). Residues 36 to 48 (QNDKQRSQAKTDP) are compositionally biased toward basic and acidic residues. The span at 52–67 (PGNMSSGSFSMSPGFN) shows a compositional bias: low complexity. A Bipartite nuclear localization signal motif is present at residues 68–75 (KTHPGSGG). A compositionally biased stretch (acidic residues) spans 79-94 (GDDESPFLDFNPELDF). Basic and acidic residues-rich tracts occupy residues 112–144 (SEEHEVGEKRKDMSDNENEESGKKRRESDDKAA) and 170–179 (AFRERKEKHL). Residues 154 to 217 (SEPTSKRKAQ…ERLQVELREY (64 aa)) form the bZIP domain. Residues 159-180 (KRKAQNRAAQRAFRERKEKHLK) are basic motif. Residues 182-189 (LETKVDEL) are leucine-zipper. The segment at 211–332 (QVELREYRKR…PSPKVPSVYN (122 aa)) is transcription activation 1. 2 disordered regions span residues 267-379 (IFNG…TKLN) and 418-441 (RGKSESVSNTPSQPNNNYEQTPGP). Positions 284-296 (SSPATSDSQVPGV) are n-CRD. Residues 300–309 (ETLNGSNNRG) show a composition bias toward polar residues. Residues 336–362 (SASSHDSSNSCSPSSSSDSHQSQMLSS) show a composition bias toward low complexity. Composition is skewed to polar residues over residues 363–379 (NGTSPEPSSNSPATKLN) and 422–437 (ESVSNTPSQPNNNYEQ). A transcription activation 2 region spans residues 377 to 480 (KLNDSVQNHH…SQDFGTFFDD (104 aa)). Disulfide bonds link Cys-531–Cys-555, Cys-531–Cys-564, and Cys-555–Cys-564. The interval 531-564 (CTKIWDRLQSMEKFRNGEIDVDNLCSELRTKARC) is c-CRD. The Nuclear export signal motif lies at 549-556 (IDVDNLCS).

Belongs to the bZIP family. YAP subfamily. In terms of processing, depending on the oxidative stress inducing agent, yap1 can undergo two distinct conformational changes, both involving disulfide bond formation, and both masking the nuclear export signal, thus abolishing nuclear export.

Its subcellular location is the nucleus. It localises to the cytoplasm. Its function is as follows. Transcription activator involved in oxidative stress response and redox homeostasis. Regulates the transcription of genes encoding antioxidant enzymes and components of the cellular thiol-reducing pathways. May be involved in antifungal resistance to voriconazole. The polypeptide is AP-1-like transcription factor yap1 (Aspergillus flavus (strain ATCC 200026 / FGSC A1120 / IAM 13836 / NRRL 3357 / JCM 12722 / SRRC 167)).